A 311-amino-acid chain; its full sequence is Probable deoxyhypusine synthase (311 aa).

Lys-284 acts as the Nucleophile in catalysis.

Belongs to the deoxyhypusine synthase family. NAD(+) is required as a cofactor.

The enzyme catalyses [eIF5A protein]-L-lysine + spermidine = [eIF5A protein]-deoxyhypusine + propane-1,3-diamine. Its pathway is protein modification; eIF5A hypusination. Catalyzes the NAD-dependent oxidative cleavage of spermidine and the subsequent transfer of the butylamine moiety of spermidine to the epsilon-amino group of a specific lysine residue of the eIF-5A precursor protein to form the intermediate deoxyhypusine residue. This Sulfurisphaera tokodaii (strain DSM 16993 / JCM 10545 / NBRC 100140 / 7) (Sulfolobus tokodaii) protein is Probable deoxyhypusine synthase (dys).